The following is a 181-amino-acid chain: Endoribonuclease YbeY (181 aa).

Zn(2+) is bound by residues histidine 115, histidine 119, and histidine 125.

It belongs to the endoribonuclease YbeY family. Requires Zn(2+) as cofactor.

Its subcellular location is the cytoplasm. Single strand-specific metallo-endoribonuclease involved in late-stage 70S ribosome quality control and in maturation of the 3' terminus of the 16S rRNA. The chain is Endoribonuclease YbeY from Bifidobacterium adolescentis (strain ATCC 15703 / DSM 20083 / NCTC 11814 / E194a).